A 424-amino-acid chain; its full sequence is Serine--tRNA ligase (424 aa).

Residue 230-232 coordinates L-serine; sequence TAE. 261 to 263 is an ATP binding site; the sequence is RSE. Glutamate 284 provides a ligand contact to L-serine. Residue 348–351 coordinates ATP; the sequence is EISS. Serine 384 is a binding site for L-serine.

The protein belongs to the class-II aminoacyl-tRNA synthetase family. Type-1 seryl-tRNA synthetase subfamily. In terms of assembly, homodimer. The tRNA molecule binds across the dimer.

The protein localises to the cytoplasm. The enzyme catalyses tRNA(Ser) + L-serine + ATP = L-seryl-tRNA(Ser) + AMP + diphosphate + H(+). It catalyses the reaction tRNA(Sec) + L-serine + ATP = L-seryl-tRNA(Sec) + AMP + diphosphate + H(+). Its pathway is aminoacyl-tRNA biosynthesis; selenocysteinyl-tRNA(Sec) biosynthesis; L-seryl-tRNA(Sec) from L-serine and tRNA(Sec): step 1/1. In terms of biological role, catalyzes the attachment of serine to tRNA(Ser). Is also able to aminoacylate tRNA(Sec) with serine, to form the misacylated tRNA L-seryl-tRNA(Sec), which will be further converted into selenocysteinyl-tRNA(Sec). The polypeptide is Serine--tRNA ligase (Streptococcus pneumoniae serotype 4 (strain ATCC BAA-334 / TIGR4)).